Here is a 752-residue protein sequence, read N- to C-terminus: Exocyst complex component EXO84B (752 aa).

Disordered regions lie at residues 511 to 532 and 724 to 752; these read QTGQ…NPEQ and TKGN…HGSY. Over residues 515–532 the composition is skewed to basic and acidic residues; it reads RTDDLRRPLDRQNRNPEQ. The span at 733 to 752 shows a compositional bias: low complexity; that stretch reads SPTASVSAQSVSSARSHGSY.

The protein belongs to the EXO84 family. As to quaternary structure, the exocyst complex is composed of SEC3, SEC5, SEC6, SEC8, SEC10, EXO70A1 and EXO84B. Interacts with SEC6, SEC10, SEC15B and EXO70A1. Interacts with EXO70B1. Binds directly to B1L.

It localises to the cytoplasm. It is found in the cytosol. The protein localises to the perinuclear region. Its subcellular location is the cytoskeleton. The protein resides in the phragmoplast. It localises to the secreted. It is found in the cell wall. The protein localises to the cell membrane. Functionally, component of the exocyst complex involved in the docking of exocytic vesicles with fusion sites on the plasma membrane during regulated or polarized secretion. Involved in polarized cell growth and organ morphogenesis. During cytokinesis, involved in cell plate initiation, cell plate maturation and formation of new primary cell wall. Probable component of an exocyst subcomplex specifically involved in autophagy-related, Golgi-independent membrane traffic to the vacuole. Regulates autophagosome formation and autophagy-related Golgi-independent import into the vacuole. Mediates ABCG36/PEN3 outer-membrane polarity at the periphery of lateral root cap and root epidermal cells. This chain is Exocyst complex component EXO84B, found in Arabidopsis thaliana (Mouse-ear cress).